An 84-amino-acid chain; its full sequence is Small ribosomal subunit protein bS20 (84 aa).

The protein belongs to the bacterial ribosomal protein bS20 family.

Functionally, binds directly to 16S ribosomal RNA. The sequence is that of Small ribosomal subunit protein bS20 from Phocaeicola vulgatus (strain ATCC 8482 / DSM 1447 / JCM 5826 / CCUG 4940 / NBRC 14291 / NCTC 11154) (Bacteroides vulgatus).